The sequence spans 147 residues: Receptor activity-modifying protein 3 (147 aa).

The N-terminal stretch at 1–22 (MATPAQRLHLLPLLLLLCGECA) is a signal peptide. The Extracellular segment spans residues 23–112 (QVCGCNETGM…CTVDRTHWED (90 aa)). N-linked (GlcNAc...) asparagine glycosylation is found at Asn-28, Asn-57, Asn-70, and Asn-102. 2 cysteine pairs are disulfide-bonded: Cys-39-Cys-71 and Cys-56-Cys-103. The chain crosses the membrane as a helical span at residues 113–137 (PPDEVLIPLIAVPVLLTVAMAGLVV). Over 138 to 147 (WRSKRTDRLL) the chain is Cytoplasmic.

The protein belongs to the RAMP family. Heterodimer of CALCRL and RAMP3; interaction induces allosteric modulation of CALCRL function and ligand specificity for adrenomedullin/ADM and intermedin/ADM2. Heterodimer of CALCR and RAMP3; interaction form the receptor complex AMYR3 for amylin/IAPP. Interacts with GPER1.

Its subcellular location is the cell membrane. It localises to the membrane. Accessory protein that interacts with and modulates the function of G-protein coupled receptors including calcitonin gene-related peptide type 1 receptor (CALCRL), calcitonin receptor (CALCR) and G-protein coupled estrogen receptor 1 (GPER1). Required for the transport of CALCRL and GPER1 receptors to the plasma membrane. Plays a role in cardioprotection by reducing cardiac hypertrophy and perivascular fibrosis in a GPER1-dependent manner. Together with CALCRL, form a receptor complex for adrenomedullin/ADM and intermedin/ADM2. Together with CALCR, act as a receptor complex for amylin/IAPP. The polypeptide is Receptor activity-modifying protein 3 (Rattus norvegicus (Rat)).